The primary structure comprises 410 residues: Kelch domain-containing protein 10 (410 aa).

A disordered region spans residues 1-40 (MSAAQGWDRNRRRGGGAAGGASGVSGAGAAGGGRGTGQLN). Arginine 13 is subject to Omega-N-methylarginine. The span at 15 to 36 (GGAAGGASGVSGAGAAGGGRGT) shows a compositional bias: gly residues. 6 Kelch repeats span residues 87–154 (GPDN…DVHV), 155–198 (CNVK…GYIY), 199–260 (STDL…IHAY), 261–319 (NLET…LQTF), 320–364 (QWVK…GSLF), and 365–403 (KIWL…GLTQ). An interaction with CUL2 region spans residues 369–410 (VVPSLLELAWEKLLAAFPNLANLSRTQLLHLGLTQELIERLK).

This sequence belongs to the KLHDC10 family. Component of a CRL2 E3 ubiquitin-protein ligase complex, also named ECS (Elongin BC-CUL2/5-SOCS-box protein) complex, composed of CUL2, Elongin BC (ELOB and ELOC), RBX1 and substrate-specific adapter KLHDC10. Interacts (via the 6 Kelch repeats) with PPP5C.

The protein resides in the nucleus. The protein localises to the cytoplasm. The protein operates within protein modification; protein ubiquitination. Functionally, substrate-recognition component of a Cul2-RING (CRL2) E3 ubiquitin-protein ligase complex of the DesCEND (destruction via C-end degrons) pathway, which recognizes a C-degron located at the extreme C-terminus of target proteins, leading to their ubiquitination and degradation. The C-degron recognized by the DesCEND pathway is usually a motif of less than ten residues and can be present in full-length proteins, truncated proteins or proteolytically cleaved forms. The CRL2(KLHDC10) complex specifically recognizes proteins with a proline-glycine (Pro-Gly) or an alanine tail (CAT tail) at the C-terminus, leading to their ubiquitination and degradation. The CRL2(KLHDC10) complex is involved in the ribosome-associated quality control (RQC) pathway, which mediates the extraction of incompletely synthesized nascent chains from stalled ribosomes: CRL2(KLHDC10) acts downstream of NEMF and recognizes CAT tails associated with stalled nascent chains, leading to their ubiquitination and degradation. Participates in the oxidative stress-induced cell death through MAP3K5 activation. Inhibits PPP5C phosphatase activity on MAP3K5. Acts as a regulator of necroptosis. This is Kelch domain-containing protein 10 from Rattus norvegicus (Rat).